A 332-amino-acid polypeptide reads, in one-letter code: Glycerol-3-phosphate dehydrogenase [NAD(P)+] (332 aa).

NADPH is bound by residues Ser11, Trp12, Arg32, Arg33, and Lys106. Sn-glycerol 3-phosphate is bound by residues Lys106 and Gly136. Ala140 provides a ligand contact to NADPH. The sn-glycerol 3-phosphate site is built by Lys191, Asp244, Ser254, Arg255, and Asn256. The active-site Proton acceptor is Lys191. Arg255 contributes to the NADPH binding site. NADPH is bound by residues Val280 and Glu282.

It belongs to the NAD-dependent glycerol-3-phosphate dehydrogenase family.

The protein resides in the cytoplasm. It catalyses the reaction sn-glycerol 3-phosphate + NAD(+) = dihydroxyacetone phosphate + NADH + H(+). It carries out the reaction sn-glycerol 3-phosphate + NADP(+) = dihydroxyacetone phosphate + NADPH + H(+). The protein operates within membrane lipid metabolism; glycerophospholipid metabolism. Catalyzes the reduction of the glycolytic intermediate dihydroxyacetone phosphate (DHAP) to sn-glycerol 3-phosphate (G3P), the key precursor for phospholipid synthesis. This is Glycerol-3-phosphate dehydrogenase [NAD(P)+] from Corynebacterium urealyticum (strain ATCC 43042 / DSM 7109).